A 258-amino-acid polypeptide reads, in one-letter code: UPF0246 protein Sfri_2896 (258 aa).

The protein belongs to the UPF0246 family.

This chain is UPF0246 protein Sfri_2896, found in Shewanella frigidimarina (strain NCIMB 400).